The sequence spans 351 residues: tRNA pseudouridine synthase D (351 aa).

Asp81 (nucleophile) is an active-site residue. The 147-residue stretch at 158-304 folds into the TRUD domain; that stretch reads GVPNYFGSQR…MRHERRAIEL (147 aa).

This sequence belongs to the pseudouridine synthase TruD family.

The catalysed reaction is uridine(13) in tRNA = pseudouridine(13) in tRNA. Its function is as follows. Responsible for synthesis of pseudouridine from uracil-13 in transfer RNAs. The sequence is that of tRNA pseudouridine synthase D from Aliivibrio fischeri (strain ATCC 700601 / ES114) (Vibrio fischeri).